The chain runs to 181 residues: Cytidylate kinase (181 aa).

Position 12 to 20 (12 to 20) interacts with ATP; that stretch reads GLAGSGTTT.

Belongs to the cytidylate kinase family. Type 2 subfamily.

It is found in the cytoplasm. The catalysed reaction is CMP + ATP = CDP + ADP. The enzyme catalyses dCMP + ATP = dCDP + ADP. This chain is Cytidylate kinase (cmk), found in Pyrococcus abyssi (strain GE5 / Orsay).